A 307-amino-acid polypeptide reads, in one-letter code: Cuticle collagen 36 (307 aa).

2 disordered regions span residues 76–102 (TRSRRDAGYKEGSGSGGSGSGGYGGPT) and 116–307 (QQGP…PPGY). Over residues 86–102 (EGSGSGGSGSGGYGGPT) the composition is skewed to gly residues. Triple-helical region regions lie at residues 89–105 (GSGGSGSGGYGGPTGAG), 118–150 (GPAGPPGPAGDTGPNGNDGHHGAPGVPGKEGSI), 167–187 (GPQGAVGQQGPKGPPGPKGKS), 194–226 (GKNGEPGMIGPPGPPGGVGEPGPPGPAGQPGRV), 231–257 (GAAGPAGPRGVKGPPGPKGLPGIAGLT), and 260–295 (GGQGPPGDAGGPGPVGGQGPPGPQGPQGPPGDEGSC). Positions 157 to 168 (PSEPCIICPPGP) are enriched in pro residues. Residues 186–196 (KSQERAADGKN) are compositionally biased toward basic and acidic residues. Residues 202–220 (IGPPGPPGGVGEPGPPGPA) show a composition bias toward pro residues. Residues 231–242 (GAAGPAGPRGVK) are compositionally biased toward low complexity. A compositionally biased stretch (gly residues) spans 258-278 (EIGGQGPPGDAGGPGPVGGQG). Positions 279–288 (PPGPQGPQGP) are enriched in pro residues.

Belongs to the cuticular collagen family. Collagen polypeptide chains are complexed within the cuticle by disulfide bonds and other types of covalent cross-links.

Nematode cuticles are composed largely of collagen-like proteins. The cuticle functions both as an exoskeleton and as a barrier to protect the worm from its environment. The polypeptide is Cuticle collagen 36 (col-36) (Caenorhabditis elegans).